Consider the following 396-residue polypeptide: Beta-peptidyl aminopeptidase BapA (396 aa).

A signal peptide spans 1–21 (MHYLKFPAIIAGMLLAGAASA). Catalysis depends on Ser-271, which acts as the Nucleophile. Active-site proton donor/acceptor residues include Ser-309 and Asp-311.

The protein belongs to the peptidase S58 family. In terms of assembly, heterooctamer of 4 heterodimers ((alpha:beta)4); each heterodimer is composed of an alpha subunit and a beta subunit processed from the same precursor. Post-translationally, autoproteolytic processing to generate the alpha and beta subunit is required for self-activation and is proposed to use a similar mechanism as substrate cleavage.

It is found in the periplasm. The enzyme catalyses Cleaves N-terminal beta-homoamino acids from peptides composed of 2 to 6 amino acids.. Inhibited by AEBSF (4-(2-aminoethyl)benzenesulfonyl fluoride, Pefabloc SC). In terms of biological role, beta-aminopeptidase that can cleave synthetic beta-peptides which consist of backbone-elongated beta-amino acid residues that are not processed by common proteolytic enzymes. Can cleave the beta-peptides beta-homoVal-beta-homoAla-beta-homoLeu and beta-homoAla-beta-homoLeu. Requires a beta-amino acid at the N-terminus of peptide substrates and cleaves the peptide bond between the N-terminal beta-amino acid and the amino acid at the second position of tripeptidic substrates of the general structure H-betahXaa-Ile-betahTyr-OH according to the following preferences with regard to the side chain of the N-terminal beta-amino acid: aliphatic and aromatic &gt; OH-containing &gt; hydrogen, basic and polar. beta-homoVal-beta-homoAla-beta-homoLeu and beta-homoAla-beta-homoLeu. The chain is Beta-peptidyl aminopeptidase BapA from Sphingosinicella microcystinivorans.